The primary structure comprises 269 residues: 3-methyl-2-oxobutanoate hydroxymethyltransferase (269 aa).

The Mg(2+) site is built by Asp48 and Asp87. 3-methyl-2-oxobutanoate contacts are provided by residues 48–49, Asp87, and Lys116; that span reads DS. Glu118 provides a ligand contact to Mg(2+). The active-site Proton acceptor is the Glu185.

It belongs to the PanB family. As to quaternary structure, homodecamer; pentamer of dimers. It depends on Mg(2+) as a cofactor.

Its subcellular location is the cytoplasm. It catalyses the reaction 3-methyl-2-oxobutanoate + (6R)-5,10-methylene-5,6,7,8-tetrahydrofolate + H2O = 2-dehydropantoate + (6S)-5,6,7,8-tetrahydrofolate. It participates in cofactor biosynthesis; (R)-pantothenate biosynthesis; (R)-pantoate from 3-methyl-2-oxobutanoate: step 1/2. Functionally, catalyzes the reversible reaction in which hydroxymethyl group from 5,10-methylenetetrahydrofolate is transferred onto alpha-ketoisovalerate to form ketopantoate. The polypeptide is 3-methyl-2-oxobutanoate hydroxymethyltransferase (Campylobacter curvus (strain 525.92)).